Consider the following 106-residue polypeptide: uncharacterized protein (106 aa).

Residues 1–23 are disordered; sequence MASGAPPLTQKTPSHARRKERRR. The segment covering 14-23 has biased composition (basic residues); it reads SHARRKERRR.

This is an uncharacterized protein from Treponema pallidum (strain Nichols).